Here is a 319-residue protein sequence, read N- to C-terminus: Aspartate carbamoyltransferase catalytic subunit (319 aa).

Residues Arg65 and Thr66 each contribute to the carbamoyl phosphate site. An L-aspartate-binding site is contributed by Lys93. The carbamoyl phosphate site is built by Arg115, His149, and Gln152. Residues Arg182 and Arg237 each contribute to the L-aspartate site. Residues Gly278 and Pro279 each coordinate carbamoyl phosphate.

It belongs to the aspartate/ornithine carbamoyltransferase superfamily. ATCase family. Heterododecamer (2C3:3R2) of six catalytic PyrB chains organized as two trimers (C3), and six regulatory PyrI chains organized as three dimers (R2).

It carries out the reaction carbamoyl phosphate + L-aspartate = N-carbamoyl-L-aspartate + phosphate + H(+). Its pathway is pyrimidine metabolism; UMP biosynthesis via de novo pathway; (S)-dihydroorotate from bicarbonate: step 2/3. Functionally, catalyzes the condensation of carbamoyl phosphate and aspartate to form carbamoyl aspartate and inorganic phosphate, the committed step in the de novo pyrimidine nucleotide biosynthesis pathway. In Janthinobacterium sp. (strain Marseille) (Minibacterium massiliensis), this protein is Aspartate carbamoyltransferase catalytic subunit.